The sequence spans 157 residues: 6,7-dimethyl-8-ribityllumazine synthase (157 aa).

5-amino-6-(D-ribitylamino)uracil-binding positions include Phe-26, 60–62 (ALE), and 86–88 (AVI). (2S)-2-hydroxy-3-oxobutyl phosphate is bound at residue 91–92 (ET). His-94 acts as the Proton donor in catalysis. Asn-119 provides a ligand contact to 5-amino-6-(D-ribitylamino)uracil. Arg-133 contributes to the (2S)-2-hydroxy-3-oxobutyl phosphate binding site.

Belongs to the DMRL synthase family.

The enzyme catalyses (2S)-2-hydroxy-3-oxobutyl phosphate + 5-amino-6-(D-ribitylamino)uracil = 6,7-dimethyl-8-(1-D-ribityl)lumazine + phosphate + 2 H2O + H(+). It functions in the pathway cofactor biosynthesis; riboflavin biosynthesis; riboflavin from 2-hydroxy-3-oxobutyl phosphate and 5-amino-6-(D-ribitylamino)uracil: step 1/2. Its function is as follows. Catalyzes the formation of 6,7-dimethyl-8-ribityllumazine by condensation of 5-amino-6-(D-ribitylamino)uracil with 3,4-dihydroxy-2-butanone 4-phosphate. This is the penultimate step in the biosynthesis of riboflavin. This Laribacter hongkongensis (strain HLHK9) protein is 6,7-dimethyl-8-ribityllumazine synthase.